Reading from the N-terminus, the 626-residue chain is tRNA uridine 5-carboxymethylaminomethyl modification enzyme MnmG (626 aa).

FAD is bound at residue 13–18 (GGGHAG). 273–287 (GPRYCPSIEDKIHRF) is an NAD(+) binding site.

This sequence belongs to the MnmG family. Homodimer. Heterotetramer of two MnmE and two MnmG subunits. The cofactor is FAD.

Its subcellular location is the cytoplasm. In terms of biological role, NAD-binding protein involved in the addition of a carboxymethylaminomethyl (cmnm) group at the wobble position (U34) of certain tRNAs, forming tRNA-cmnm(5)s(2)U34. The polypeptide is tRNA uridine 5-carboxymethylaminomethyl modification enzyme MnmG (Acinetobacter baumannii (strain AYE)).